The sequence spans 487 residues: UDP-glucose flavonoid 3-O-glucosyltransferase 7 (487 aa).

Residue His-23 is the Proton acceptor of the active site. An anthocyanidin is bound at residue His-23. Asp-121 acts as the Charge relay in catalysis. Residues Ala-345, Gln-347, His-362, Trp-365, Asn-366, Ser-367, and Glu-370 each contribute to the UDP-alpha-D-glucose site. Gly-385 contributes to the an anthocyanidin binding site. UDP-alpha-D-glucose-binding residues include Glu-386 and Gln-387.

It belongs to the UDP-glycosyltransferase family. As to expression, strongly expressed in achenes and receptacles.

The catalysed reaction is a flavonol + UDP-alpha-D-glucose = a flavonol 3-O-beta-D-glucoside + UDP + H(+). Broad spectrum multifunctional glucosyltransferase. Catalyzes the formation of flavonol 3-O- and 4'-O-glucosides during fruit ripening. Accepted substrates include several flavonoids, hydroxycoumarins and beta-naphthols. Uses UDP-Glc as a sugar donor, but not UDP-Gal or UDP-GlcUA. May also be involved in detoxification of xenobiotics. The polypeptide is UDP-glucose flavonoid 3-O-glucosyltransferase 7 (Fragaria ananassa (Strawberry)).